A 381-amino-acid chain; its full sequence is Probable peptidoglycan glycosyltransferase FtsW (381 aa).

The next 9 helical transmembrane spans lie at 16–36 (LVLL…VYSA), 56–76 (LIFA…DYQL), 80–100 (WAVP…IPGI), 145–165 (LLSA…GLLL), 168–188 (PDMG…FAAG), 191–211 (LIFI…LVVH), 274–294 (VIGE…FFIL), 312–332 (FLAL…MAVV), and 343–363 (LPFL…VGIL).

This sequence belongs to the SEDS family. FtsW subfamily.

The protein resides in the cell inner membrane. It catalyses the reaction [GlcNAc-(1-&gt;4)-Mur2Ac(oyl-L-Ala-gamma-D-Glu-L-Lys-D-Ala-D-Ala)](n)-di-trans,octa-cis-undecaprenyl diphosphate + beta-D-GlcNAc-(1-&gt;4)-Mur2Ac(oyl-L-Ala-gamma-D-Glu-L-Lys-D-Ala-D-Ala)-di-trans,octa-cis-undecaprenyl diphosphate = [GlcNAc-(1-&gt;4)-Mur2Ac(oyl-L-Ala-gamma-D-Glu-L-Lys-D-Ala-D-Ala)](n+1)-di-trans,octa-cis-undecaprenyl diphosphate + di-trans,octa-cis-undecaprenyl diphosphate + H(+). Its pathway is cell wall biogenesis; peptidoglycan biosynthesis. Functionally, peptidoglycan polymerase that is essential for cell division. The polypeptide is Probable peptidoglycan glycosyltransferase FtsW (Trichlorobacter lovleyi (strain ATCC BAA-1151 / DSM 17278 / SZ) (Geobacter lovleyi)).